A 442-amino-acid chain; its full sequence is Putative FNIP repeat-containing protein L170 (442 aa).

FNIP repeat units follow at residues Phe213–Gly252, Phe253–Phe294, and Phe295–Tyr348.

The protein is Putative FNIP repeat-containing protein L170 of Acanthamoeba polyphaga mimivirus (APMV).